A 228-amino-acid chain; its full sequence is 2-C-methyl-D-erythritol 4-phosphate cytidylyltransferase (228 aa).

Belongs to the IspD/TarI cytidylyltransferase family. IspD subfamily.

The catalysed reaction is 2-C-methyl-D-erythritol 4-phosphate + CTP + H(+) = 4-CDP-2-C-methyl-D-erythritol + diphosphate. It functions in the pathway isoprenoid biosynthesis; isopentenyl diphosphate biosynthesis via DXP pathway; isopentenyl diphosphate from 1-deoxy-D-xylulose 5-phosphate: step 2/6. In terms of biological role, catalyzes the formation of 4-diphosphocytidyl-2-C-methyl-D-erythritol from CTP and 2-C-methyl-D-erythritol 4-phosphate (MEP). In Dechloromonas aromatica (strain RCB), this protein is 2-C-methyl-D-erythritol 4-phosphate cytidylyltransferase.